The following is a 345-amino-acid chain: Phenylalanine--tRNA ligase alpha subunit (345 aa).

Glu253 contacts Mg(2+).

Belongs to the class-II aminoacyl-tRNA synthetase family. Phe-tRNA synthetase alpha subunit type 1 subfamily. Tetramer of two alpha and two beta subunits. The cofactor is Mg(2+).

It is found in the cytoplasm. The enzyme catalyses tRNA(Phe) + L-phenylalanine + ATP = L-phenylalanyl-tRNA(Phe) + AMP + diphosphate + H(+). The protein is Phenylalanine--tRNA ligase alpha subunit of Nitratidesulfovibrio vulgaris (strain DP4) (Desulfovibrio vulgaris).